Consider the following 317-residue polypeptide: Olfactory receptor 2T27 (317 aa).

Residues 1–22 (MEQSNYSVYADFILLGLFSNAR) lie on the Extracellular side of the membrane. Asparagine 5 carries an N-linked (GlcNAc...) asparagine glycan. The chain crosses the membrane as a helical span at residues 23–43 (FPWLLFALILLVFLTSIASNV). The Cytoplasmic portion of the chain corresponds to 44–60 (VKIILIHIDSRLHTPMY). Residues 61–83 (FLLSQLSLRDILYISTIVPKMLV) traverse the membrane as a helical segment. Residues 84 to 97 (DQVMSQRAISFAGC) are Extracellular-facing. The cysteines at positions 97 and 189 are disulfide-linked. The chain crosses the membrane as a helical span at residues 98 to 118 (TAQHFLYLTLAGAEFFLLGLM). Residues 119–139 (SYDRYVAICNPLHYPVLMSRK) are Cytoplasmic-facing. Residues 140–160 (ICWLIVAAAWLGGSIDGFLLT) traverse the membrane as a helical segment. The Extracellular segment spans residues 161-197 (PVTMQFPFCASREINHFFCEVPALLKLSCTDTSAYET). A helical membrane pass occupies residues 198–218 (AMYVCCIMMLLIPFSVISGSY). Topologically, residues 219-244 (TRILITVYRMSEAEGRGKAVATCSSH) are cytoplasmic. The helical transmembrane segment at 245–265 (MVVVSLFYGAAMYTYVLPHSY) threads the bilayer. The Extracellular segment spans residues 266–271 (HTPEQD). A helical transmembrane segment spans residues 272-292 (KAVSAFYTILTPMLNPLIYSL). The Cytoplasmic portion of the chain corresponds to 293 to 317 (RNKDVTGALQKVVGRCVSSGKVTTF).

The protein belongs to the G-protein coupled receptor 1 family.

The protein resides in the cell membrane. In terms of biological role, odorant receptor. In Homo sapiens (Human), this protein is Olfactory receptor 2T27 (OR2T27).